We begin with the raw amino-acid sequence, 194 residues long: Large ribosomal subunit protein eL15 (194 aa).

Positions Ala-165–Lys-194 are disordered.

Belongs to the eukaryotic ribosomal protein eL15 family.

The polypeptide is Large ribosomal subunit protein eL15 (Methanococcus aeolicus (strain ATCC BAA-1280 / DSM 17508 / OCM 812 / Nankai-3)).